Reading from the N-terminus, the 476-residue chain is H2.0-like homeobox protein (476 aa).

Disordered stretches follow at residues 120–169, 328–401, and 413–476; these read QHLP…PSSK, WRHS…HQTT, and TASS…LAGL. Low complexity-rich tracts occupy residues 123–134 and 158–168; these read PQQSPTQQQQPQ and HHSGSAPAPSS. The segment at residues 273–332 is a DNA-binding region (homeobox); that stretch reads RSWSRAVFSNLQRKGLEKRFEIQKYVTKPDRKQLAAMLGLTDAQVKVWFQNRRMKWRHSK. 2 stretches are compositionally biased toward basic and acidic residues: residues 331–346 and 355–368; these read SKEAQAQKDKDKEAGE and EGEREERSPSRSEG. The segment covering 369–379 has biased composition (acidic residues); sequence EAESESSDSES. The segment covering 386 to 397 has biased composition (basic and acidic residues); it reads DTERTEGTERSL. The segment covering 413–434 has biased composition (low complexity); that stretch reads TASSSTSGSSFSFSSTSSLGSG. 2 stretches are compositionally biased toward polar residues: residues 435-446 and 455-467; these read NTHVGSASSLGG and HQPSVTSSPQSPE.

The protein belongs to the H2.0 homeobox family. As to expression, expressed in Th1 cells, CD8-positive T-cells, B-cells and NK cells.

Its subcellular location is the nucleus. In terms of biological role, transcription factor required for TBX21/T-bet-dependent maturation of Th1 cells as well as maintenance of Th1-specific gene expression. Involved in embryogenesis and hematopoiesis. The chain is H2.0-like homeobox protein (Hlx) from Mus musculus (Mouse).